We begin with the raw amino-acid sequence, 480 residues long: Trigger factor (480 aa).

The PPIase FKBP-type domain occupies 161 to 249; it reads GDRLLITGKF…VVEVLKEQLP (89 aa). Positions 426-480 are disordered; it reads TEEPVEKEAEEKNEEFAIDHEVLPTKDHDAIPAAKYDDNTPKGAETEDKQEKDKD. The segment covering 429–480 has biased composition (basic and acidic residues); sequence PVEKEAEEKNEEFAIDHEVLPTKDHDAIPAAKYDDNTPKGAETEDKQEKDKD.

This sequence belongs to the FKBP-type PPIase family. Tig subfamily.

The protein resides in the cytoplasm. The catalysed reaction is [protein]-peptidylproline (omega=180) = [protein]-peptidylproline (omega=0). Functionally, involved in protein export. Acts as a chaperone by maintaining the newly synthesized protein in an open conformation. Functions as a peptidyl-prolyl cis-trans isomerase. This chain is Trigger factor, found in Rhodopirellula baltica (strain DSM 10527 / NCIMB 13988 / SH1).